The chain runs to 504 residues: Maturase K (504 aa).

Belongs to the intron maturase 2 family. MatK subfamily.

The protein localises to the plastid. The protein resides in the chloroplast. In terms of biological role, usually encoded in the trnK tRNA gene intron. Probably assists in splicing its own and other chloroplast group II introns. The sequence is that of Maturase K from Hamamelis virginiana (Witch-hazel).